Consider the following 189-residue polypeptide: Threonylcarbamoyl-AMP synthase (189 aa).

The YrdC-like domain maps to 6-189 (SPAFESVLTA…ALTGELYRQG (184 aa)).

Belongs to the SUA5 family. TsaC subfamily.

The protein resides in the cytoplasm. It carries out the reaction L-threonine + hydrogencarbonate + ATP = L-threonylcarbamoyladenylate + diphosphate + H2O. Functionally, required for the formation of a threonylcarbamoyl group on adenosine at position 37 (t(6)A37) in tRNAs that read codons beginning with adenine. Catalyzes the conversion of L-threonine, HCO(3)(-)/CO(2) and ATP to give threonylcarbamoyl-AMP (TC-AMP) as the acyladenylate intermediate, with the release of diphosphate. In Photorhabdus laumondii subsp. laumondii (strain DSM 15139 / CIP 105565 / TT01) (Photorhabdus luminescens subsp. laumondii), this protein is Threonylcarbamoyl-AMP synthase.